A 310-amino-acid chain; its full sequence is MTTSLLLRPRWIDPVMFLYDNGGGLDDTSKNMEGFTGGNFSPSPCRNLMSHPASLAPSATYPSSEVAAAAAGDSGKQCSPCSAVQGSASASISYGYFGGGGYYPCRMSHHHGSGGGVKTCAQSPASGSPYGEKYMDTSASTGEDYTSSRAKEFALYSSYASSPYQPVPSYLDVPVVQAISGPSEPRHESLLPMESYQPWAITTSGWNGQVYCTKEQQQTGNVWKSSIPESVSHGGADGSSFRRGRKKRVPYTKVQLKELEREYATNKFITKDKRRRISAQTNLSERQVTIWFQNRRVKEKKVVNKLKSSS.

Positions 244-303 (GRKKRVPYTKVQLKELEREYATNKFITKDKRRRISAQTNLSERQVTIWFQNRRVKEKKVV) form a DNA-binding region, homeobox.

The protein belongs to the Abd-B homeobox family.

The protein localises to the nucleus. In terms of biological role, sequence-specific transcription factor which is part of a developmental regulatory system that provides cells with specific positional identities on the anterior-posterior axis. The sequence is that of Homeobox protein Hox-A13a (hoxa13a) from Danio rerio (Zebrafish).